Reading from the N-terminus, the 160-residue chain is Small ribosomal subunit protein uS9 (160 aa).

The protein belongs to the universal ribosomal protein uS9 family.

This chain is Small ribosomal subunit protein uS9, found in Cereibacter sphaeroides (strain ATCC 17029 / ATH 2.4.9) (Rhodobacter sphaeroides).